Reading from the N-terminus, the 371-residue chain is Chaperone protein DnaJ (371 aa).

Residues 5-70 (DYYEVLGVNR…QKRAAYDQYG (66 aa)) form the J domain. A disordered region spans residues 31–52 (KYHPDRNPDNPKAEESFKEAKE). Positions 32–52 (YHPDRNPDNPKAEESFKEAKE) are enriched in basic and acidic residues. Residues 132–210 (RTETKIRIPV…CQGAGRVKKH (79 aa)) form a CR-type zinc finger. Zn(2+) contacts are provided by Cys145, Cys148, Cys162, Cys165, Cys184, Cys187, Cys198, and Cys201. CXXCXGXG motif repeat units lie at residues 145 to 152 (CETCHGSG), 162 to 169 (CTTCGGHG), 184 to 191 (CPKCHGSG), and 198 to 205 (CPSCQGAG).

This sequence belongs to the DnaJ family. As to quaternary structure, homodimer. It depends on Zn(2+) as a cofactor.

Its subcellular location is the cytoplasm. Its function is as follows. Participates actively in the response to hyperosmotic and heat shock by preventing the aggregation of stress-denatured proteins and by disaggregating proteins, also in an autonomous, DnaK-independent fashion. Unfolded proteins bind initially to DnaJ; upon interaction with the DnaJ-bound protein, DnaK hydrolyzes its bound ATP, resulting in the formation of a stable complex. GrpE releases ADP from DnaK; ATP binding to DnaK triggers the release of the substrate protein, thus completing the reaction cycle. Several rounds of ATP-dependent interactions between DnaJ, DnaK and GrpE are required for fully efficient folding. Also involved, together with DnaK and GrpE, in the DNA replication of plasmids through activation of initiation proteins. The polypeptide is Chaperone protein DnaJ (Methylovorus sp. (strain SS1 / DSM 11726)).